Here is a 68-residue protein sequence, read N- to C-terminus: Non-disulfide-bridged peptide 5.6 (68 aa).

An N-terminal signal peptide occupies residues 1–23 (MKTQVIIFIMAVVFLQLLSQSEA). Residues 37–68 (ELRNIDLDQFDDMFDEPEISAADMRFLQELLK) constitute a propeptide that is removed on maturation.

It belongs to the non-disulfide-bridged peptide (NDBP) superfamily. Short antimicrobial peptide (group 4) family. Expressed by the venom gland.

It is found in the secreted. The protein localises to the target cell membrane. In terms of biological role, antibacterial peptide with activity against both Gram-positive and Gram-negative bacteria probably by forming pores in the cell membrane. Also has weak hemolytic activity. Does not show antifungal activity. This is Non-disulfide-bridged peptide 5.6 from Hoffmannihadrurus gertschi (Scorpion).